Here is a 312-residue protein sequence, read N- to C-terminus: Protoheme IX farnesyltransferase (312 aa).

9 consecutive transmembrane segments (helical) span residues 29–49 (VMSLVVFTGLVGLVLAPGHMN), 50–70 (PVLAVISILCIAVGAGASGAL), 90–110 (IPAGIIAPNQVLAFGLTLSAF), 117–137 (LMVNWLAAALLAFTIFFYAVI), 150–170 (IVIGGAAGAFPPMIGWAAATG), 177–197 (LVLFMIIFLWTPPHFWALSLF), 223–243 (ALFYAVLMAPVGVLPWVMGFA), 246–266 (FYGVVSTLLGLAFVYYAWRLW), and 292–312 (IFAVLLFEALTFKLLAAFGVF).

It belongs to the UbiA prenyltransferase family. Protoheme IX farnesyltransferase subfamily.

It is found in the cell inner membrane. It catalyses the reaction heme b + (2E,6E)-farnesyl diphosphate + H2O = Fe(II)-heme o + diphosphate. It functions in the pathway porphyrin-containing compound metabolism; heme O biosynthesis; heme O from protoheme: step 1/1. In terms of biological role, converts heme B (protoheme IX) to heme O by substitution of the vinyl group on carbon 2 of heme B porphyrin ring with a hydroxyethyl farnesyl side group. This chain is Protoheme IX farnesyltransferase, found in Brucella melitensis biotype 1 (strain ATCC 23456 / CCUG 17765 / NCTC 10094 / 16M).